The primary structure comprises 340 residues: L-threonine 3-dehydrogenase (340 aa).

Cys38 contributes to the Zn(2+) binding site. Catalysis depends on charge relay system residues Thr40 and His43. The Zn(2+) site is built by His63, Glu64, Cys93, Cys96, Cys99, and Cys107. Residues Ile175, Asp195, Arg200, 261–263 (LGI), and 285–286 (IY) contribute to the NAD(+) site.

The protein belongs to the zinc-containing alcohol dehydrogenase family. As to quaternary structure, homotetramer. Requires Zn(2+) as cofactor.

The protein resides in the cytoplasm. It carries out the reaction L-threonine + NAD(+) = (2S)-2-amino-3-oxobutanoate + NADH + H(+). Its pathway is amino-acid degradation; L-threonine degradation via oxydo-reductase pathway; glycine from L-threonine: step 1/2. Functionally, catalyzes the NAD(+)-dependent oxidation of L-threonine to 2-amino-3-ketobutyrate. The polypeptide is L-threonine 3-dehydrogenase (Stenotrophomonas maltophilia (strain K279a)).